The following is a 175-amino-acid chain: Cytochrome c-type biogenesis protein CcmE (175 aa).

Residues 1–8 (MNAVRRKK) lie on the Cytoplasmic side of the membrane. Residues 9–29 (LIWVAATLAGAIIAVLLVIYA) form a helical; Signal-anchor for type II membrane protein membrane-spanning segment. Topologically, residues 30–175 (IGQQTDYYFD…GNHTTSTLQE (146 aa)) are periplasmic. Heme contacts are provided by H124 and Y128. The tract at residues 142–175 (AAKGVTPTSEQFSPAIPVKQTAGEGNHTTSTLQE) is disordered.

The protein belongs to the CcmE/CycJ family.

The protein resides in the cell inner membrane. Heme chaperone required for the biogenesis of c-type cytochromes. Transiently binds heme delivered by CcmC and transfers the heme to apo-cytochromes in a process facilitated by CcmF and CcmH. In Psychrobacter sp. (strain PRwf-1), this protein is Cytochrome c-type biogenesis protein CcmE.